Reading from the N-terminus, the 340-residue chain is MTKITVVGAGSWGTALAMVLADNGHDVRIWGNRSELMDEINTKHENSRYLPGITLPSTIVAYSSLEEALVDVNVVLLVVPTKAYREVLQDMKKYVAGPTTWIHASKGIEPGTSKRISEVIEEEIPEDLIKDVVVLSGPSHAEEVGLRQATTVTSAAKRMEAAEEVQDLFMNSYFRVYTNPDIVGVELGGALKNIIALAAGITDGLGLGDNAKAALMTRGLTEIARLGRKMGGNPLTFAGLTGMGDLIVTCTSVHSRNWRAGNMLGKGHSLEEVLESMGMVVEGVRTTKAAHELAEKMEVEMPITAALYDVLFNGNNVKDAVGSLMGRVRKHEVEAIPDLL.

Ser-11, Trp-12, Arg-33, and Lys-106 together coordinate NADPH. Residues Lys-106, Gly-137, and Ser-139 each coordinate sn-glycerol 3-phosphate. Ala-141 serves as a coordination point for NADPH. Lys-192, Asp-245, Ser-255, Arg-256, and Asn-257 together coordinate sn-glycerol 3-phosphate. Lys-192 (proton acceptor) is an active-site residue. Residue Arg-256 coordinates NADPH. 2 residues coordinate NADPH: Val-280 and Glu-282.

This sequence belongs to the NAD-dependent glycerol-3-phosphate dehydrogenase family.

It localises to the cytoplasm. It carries out the reaction sn-glycerol 3-phosphate + NAD(+) = dihydroxyacetone phosphate + NADH + H(+). It catalyses the reaction sn-glycerol 3-phosphate + NADP(+) = dihydroxyacetone phosphate + NADPH + H(+). It participates in membrane lipid metabolism; glycerophospholipid metabolism. In terms of biological role, catalyzes the reduction of the glycolytic intermediate dihydroxyacetone phosphate (DHAP) to sn-glycerol 3-phosphate (G3P), the key precursor for phospholipid synthesis. The protein is Glycerol-3-phosphate dehydrogenase [NAD(P)+] of Bacillus cereus (strain 03BB102).